The following is a 444-amino-acid chain: Phosphoglucosamine mutase (444 aa).

Residue S101 is the Phosphoserine intermediate of the active site. Mg(2+) is bound by residues S101, D240, D242, and D244. At S101 the chain carries Phosphoserine.

The protein belongs to the phosphohexose mutase family. Mg(2+) serves as cofactor. Activated by phosphorylation.

It carries out the reaction alpha-D-glucosamine 1-phosphate = D-glucosamine 6-phosphate. Catalyzes the conversion of glucosamine-6-phosphate to glucosamine-1-phosphate. In Photobacterium profundum (strain SS9), this protein is Phosphoglucosamine mutase.